Reading from the N-terminus, the 533-residue chain is uncharacterized protein (533 aa).

4 stretches are compositionally biased toward polar residues: residues 30 to 43, 79 to 91, 231 to 247, and 254 to 263; these read SQQG…VKNH, NAGT…THLS, NVKS…SSSA, and GRQSNSPNSN. Disordered stretches follow at residues 30-92 and 221-274; these read SQQG…HLSA and SLSP…PGAS. Ser336 bears the Phosphoserine mark. Residues 475 to 510 form a disordered region; sequence HPSLSNSAASPPVSSPGLRRSHIPVHEGLKHTRDGV. Over residues 476–490 the composition is skewed to low complexity; that stretch reads PSLSNSAASPPVSSP. Residues 498-510 show a composition bias toward basic and acidic residues; the sequence is PVHEGLKHTRDGV.

Its subcellular location is the nucleus. This is an uncharacterized protein from Schizosaccharomyces pombe (strain 972 / ATCC 24843) (Fission yeast).